The following is a 518-amino-acid chain: Nicotine N-demethylase CYP82E3 (518 aa).

Residues 2–22 (VFPVEAIVGLVTFTFLFYFLW) form a helical membrane-spanning segment. Lysine 254 participates in a covalent cross-link: Glycyl lysine isopeptide (Lys-Gly) (interchain with G-Cter in ubiquitin). A heme-binding site is contributed by cysteine 458.

Belongs to the cytochrome P450 family. CYP82E2 subfamily. Heme is required as a cofactor. As to expression, expressed in leaves.

It is found in the membrane. The enzyme catalyses (S)-nicotine + reduced [NADPH--hemoprotein reductase] + O2 = (S)-nornicotine + formaldehyde + oxidized [NADPH--hemoprotein reductase] + H2O + H(+). The protein operates within alkaloid biosynthesis; nicotine biosynthesis. Its function is as follows. Involved in the biosynthesis of pyridine alkaloid natural products, leading mainly to the production of anabasine, anatabine, nicotine and nornicotine, effective deterrents against herbivores with antiparasitic and pesticide properties (neurotoxins); nornicotine serves as the precursor in the synthesis of the carcinogen compound N'-nitrosonornicotine (NNN). Catalyzes the demethylation of nicotine to form nornicotine. The sequence is that of Nicotine N-demethylase CYP82E3 from Nicotiana tomentosiformis (Tobacco).